Consider the following 102-residue polypeptide: Small ribosomal subunit protein uS10 (102 aa).

It belongs to the universal ribosomal protein uS10 family. As to quaternary structure, part of the 30S ribosomal subunit.

Involved in the binding of tRNA to the ribosomes. This is Small ribosomal subunit protein uS10 from Oceanobacillus iheyensis (strain DSM 14371 / CIP 107618 / JCM 11309 / KCTC 3954 / HTE831).